We begin with the raw amino-acid sequence, 252 residues long: Expansin-A12 (252 aa).

A signal peptide spans 1–23 (MDMKGTYLVTVILLVSTLSVGMC). The Expansin-like EG45 domain occupies 45–156 (GGACGYDNPY…RRVGCKRRGG (112 aa)). The region spanning 166–246 (NFNMVMISNV…SWWFGQTFSS (81 aa)) is the Expansin-like CBD domain.

The protein belongs to the expansin family. Expansin A subfamily.

The protein resides in the secreted. It is found in the cell wall. It localises to the membrane. Causes loosening and extension of plant cell walls by disrupting non-covalent bonding between cellulose microfibrils and matrix glucans. No enzymatic activity has been found. The polypeptide is Expansin-A12 (EXPA12) (Arabidopsis thaliana (Mouse-ear cress)).